The following is a 957-amino-acid chain: ERC protein 2 (957 aa).

The segment covering 1–13 (MYGSARTISNPEG) has biased composition (polar residues). The segment at 1 to 44 (MYGSARTISNPEGSPSRSPRLPRSPRLGHRRTSSGGGGGTGKTL) is disordered. The span at 14–25 (SPSRSPRLPRSP) shows a compositional bias: low complexity. Ser-65 and Ser-666 each carry phosphoserine. The stretch at 140-917 (RQVRDSTMLD…RMKLMADNYD (778 aa)) forms a coiled coil. The tract at residues 760–957 (DQNKKVANLK…DQDDEEGIWA (198 aa)) is involved in binding to RIMS1. Residues 918–957 (DDHHHYHHHHHHHHHRSPGRSQHSNHRPSPDQDDEEGIWA) are disordered. Positions 922–943 (HYHHHHHHHHHRSPGRSQHSNH) are enriched in basic residues. Over residues 948–957 (DQDDEEGIWA) the composition is skewed to acidic residues.

Interacts with BSN, ERC1, PPFIA1, PPFIA2, PPFIA3 and PPFIA4. Interacts through its C-terminus with the PDZ domain of RIMS1. Part of a complex consisting of ERC2, RIMS1 and UNC13A. In terms of tissue distribution, predominantly expressed in brain, including hippocampus, cortex, cerebellum, amygdala and olfactory bulb.

It localises to the cytoplasm. The protein resides in the synapse. It is found in the presynaptic active zone. The protein localises to the cytoskeleton. In terms of biological role, thought to be involved in the organization of the cytomatrix at the nerve terminals active zone (CAZ) which regulates neurotransmitter release. Seems to act together with BSN. May recruit liprin-alpha proteins to the CAZ. The chain is ERC protein 2 (Erc2) from Rattus norvegicus (Rat).